The primary structure comprises 630 residues: 1-deoxy-D-xylulose-5-phosphate synthase (630 aa).

Residues His72 and 113–115 (GHS) contribute to the thiamine diphosphate site. Asp144 serves as a coordination point for Mg(2+). Residues 145-146 (GA), Asn173, Tyr284, and Glu367 contribute to the thiamine diphosphate site. Asn173 lines the Mg(2+) pocket.

The protein belongs to the transketolase family. DXPS subfamily. Homodimer. It depends on Mg(2+) as a cofactor. Requires thiamine diphosphate as cofactor.

It catalyses the reaction D-glyceraldehyde 3-phosphate + pyruvate + H(+) = 1-deoxy-D-xylulose 5-phosphate + CO2. It participates in metabolic intermediate biosynthesis; 1-deoxy-D-xylulose 5-phosphate biosynthesis; 1-deoxy-D-xylulose 5-phosphate from D-glyceraldehyde 3-phosphate and pyruvate: step 1/1. Catalyzes the acyloin condensation reaction between C atoms 2 and 3 of pyruvate and glyceraldehyde 3-phosphate to yield 1-deoxy-D-xylulose-5-phosphate (DXP). The chain is 1-deoxy-D-xylulose-5-phosphate synthase from Bacillus cytotoxicus (strain DSM 22905 / CIP 110041 / 391-98 / NVH 391-98).